Reading from the N-terminus, the 525-residue chain is Protein BSP1 (525 aa).

4 disordered regions span residues 21–40 (INKP…TPIE), 98–262 (QQQH…PSKM), 285–325 (LSSE…VPPK), and 339–525 (DKTG…PTKI). Basic and acidic residues predominate over residues 110 to 122 (IEPVRHIIPDRHS). The span at 148 to 162 (NRASSENVVKSTTSA) shows a compositional bias: polar residues. Basic and acidic residues-rich tracts occupy residues 171-182 (YKDDITAKKLDV), 201-223 (DKNK…EDNK), and 230-242 (KDQD…KPTR). Polar residues predominate over residues 251-261 (QLKSPPQSPSK). Low complexity predominate over residues 285–297 (LSSEENSRSSLSE). Composition is skewed to basic and acidic residues over residues 314 to 325 (KAEKKKPVVPPK) and 339 to 354 (DKTG…EPEF). Polar residues predominate over residues 382-398 (QNLSKNTENKKSVAQSK). The span at 447-456 (EESEISDSEP) shows a compositional bias: acidic residues. Positions 510 to 525 (NKSRSRGPKRKLPTKI) are enriched in basic residues.

Its subcellular location is the cell membrane. It is found in the cytoplasm. The protein localises to the cytoskeleton. It localises to the actin patch. Cortical patch protein involved in endocytosis. The sequence is that of Protein BSP1 (BSP1) from Candida glabrata (strain ATCC 2001 / BCRC 20586 / JCM 3761 / NBRC 0622 / NRRL Y-65 / CBS 138) (Yeast).